A 103-amino-acid chain; its full sequence is MGIQKLRIALKAYETSLLNDSCTQIINAVETGGVKAIGPIPLPTKRRIYCVLRSPHVNKDAREHFEMRTHKKIIDVYKPTDDVMENLRKLDLAAGVDVEIKSL.

The protein belongs to the universal ribosomal protein uS10 family. In terms of assembly, part of the 30S ribosomal subunit.

The protein resides in the plastid. Its subcellular location is the chloroplast. In terms of biological role, involved in the binding of tRNA to the ribosomes. In Emiliania huxleyi (Coccolithophore), this protein is Small ribosomal subunit protein uS10c.